The sequence spans 1647 residues: Transcription elongation factor SPT6 homolog (1647 aa).

The interval 1–209 (MARNAISDDE…SKKKKYRQGS (209 aa)) is disordered. Acidic residues predominate over residues 7–20 (SDDEEDHELEDDDG). The segment covering 21-30 (EPVHGDPAEH) has biased composition (basic and acidic residues). The span at 31–67 (DENDDEEDDDDVGNEYENDGFIVNDEDEEEEEEEDEE) shows a compositional bias: acidic residues. Over residues 103–114 (KFKKRQYKRLKK) the composition is skewed to basic residues. Residues 132-151 (DSRGGTRRSAEDKIKDRLFD) show a composition bias toward basic and acidic residues. Positions 152 to 191 (DVDVDDPPDDVGDEEDLVVEEDVVGSEDEMADFIVDEDDE) are enriched in acidic residues. The S1 motif domain maps to 1103-1174 (GRIVQASVRR…QRYQVFLICK (72 aa)). The segment at 1429–1647 (PMRSPADHGS…RKSDGGGGGW (219 aa)) is disordered. 2 tandem repeats follow at residues 1443–1444 (GW) and 1452–1453 (GW). Positions 1443 to 1647 (GWGSSQSEGG…RKSDGGGGGW (205 aa)) are 12 X 2 AA repeats of [WG]-[GW] repeats. Over residues 1462–1471 (SGRGGEYRNG) the composition is skewed to gly residues. Positions 1496 to 1507 (RRDDMNSDRQDG) are enriched in basic and acidic residues. 6 repeat units span residues 1511-1512 (WG), 1522-1523 (GW), 1530-1531 (GW), 1547-1548 (GW), 1563-1564 (WG), and 1574-1575 (GW). Composition is skewed to gly residues over residues 1519–1532 (ADGG…GGWG), 1539–1552 (KTGG…GSES), 1561–1579 (GSWG…GNDS), and 1588–1600 (GGFG…GGSD). Repeat copies occupy residues 1601 to 1602 (WG), 1615 to 1616 (GW), 1630 to 1631 (GW), and 1646 to 1647 (GW).

It belongs to the SPT6 family. Interacts (via N-terminus) with IWS1. Expressed in shoot apical meristem, leaf primordia, vasculature of young leaves, inflorescence meristem, floral meristem, young floral organs, developing ovules and anthers.

It is found in the nucleus. Transcription elongation factor that enhances the transcription elongation by RNA polymerase II (RNAPII). Plays an important role in regulating embryo apical and basal patterning during early embryogenesis, partly through negative regulation of the transcription factors PHABULOSA and PHAVOLUTA. The chain is Transcription elongation factor SPT6 homolog from Arabidopsis thaliana (Mouse-ear cress).